We begin with the raw amino-acid sequence, 513 residues long: Protein phosphatase 1H (513 aa).

S7 is subject to Phosphoserine. The PPM-type phosphatase domain maps to 77 to 506 (ATGYAEVINA…DDISVYVIPL (430 aa)). Residues 110–133 (ITSTPNRNSKRRSSLPNGEGLQLK) are disordered. T113 bears the Phosphothreonine mark. Residues S123 and S210 each carry the phosphoserine modification. Position 212 is an omega-N-methylarginine (R212). S220 is subject to Phosphoserine. Phosphothreonine is present on T223. Phosphoserine is present on S421.

It belongs to the PP2C family.

It is found in the nucleus. It localises to the cytoplasm. It catalyses the reaction O-phospho-L-seryl-[protein] + H2O = L-seryl-[protein] + phosphate. The enzyme catalyses O-phospho-L-threonyl-[protein] + H2O = L-threonyl-[protein] + phosphate. In terms of biological role, dephosphorylates CDKN1B at 'Thr-187', thus removing a signal for proteasomal degradation. The polypeptide is Protein phosphatase 1H (Ppm1h) (Rattus norvegicus (Rat)).